Here is a 79-residue protein sequence, read N- to C-terminus: Large ribosomal subunit protein uL24 (79 aa).

The disordered stretch occupies residues 1–29; it reads MPKLKKLLLKVSTSKPNTNPPSQNEEKGT. The span at 11-23 shows a compositional bias: polar residues; it reads VSTSKPNTNPPSQ.

Belongs to the universal ribosomal protein uL24 family. As to quaternary structure, part of the 50S ribosomal subunit.

Its function is as follows. One of two assembly initiator proteins, it binds directly to the 5'-end of the 23S rRNA, where it nucleates assembly of the 50S subunit. One of the proteins that surrounds the polypeptide exit tunnel on the outside of the subunit. The polypeptide is Large ribosomal subunit protein uL24 (rplX) (Onion yellows phytoplasma (strain OY-M)).